Consider the following 193-residue polypeptide: Bcl-2-binding component 3 (193 aa).

Disordered stretches follow at residues 1 to 32 (MARA…RLMP) and 71 to 131 (ALGG…VEEE). Residue Ser-10 is modified to Phosphoserine. Residues 137-151 (IGAQLRRMADDLNAQ) carry the BH3 motif.

Belongs to the Bcl-2 family. In terms of assembly, interacts with MCL1 and BCL2A1. Interacts (via BH3 domain) with BCL2 and BCL2L1/BCL-XL. Interacts (via BH3 domain) with NOL3/ARC (via CARD domain); this interaction prevents BBC3 association with BCL2 and results in CASP8 activation.

Its subcellular location is the mitochondrion. Functionally, essential mediator of p53/TP53-dependent and p53/TP53-independent apoptosis. Promotes partial unfolding of BCL2L1 and dissociation of BCL2L1 from p53/TP53, releasing the bound p53/TP53 to induce apoptosis. Regulates ER stress-induced neuronal apoptosis. The polypeptide is Bcl-2-binding component 3 (Bbc3) (Rattus norvegicus (Rat)).